Reading from the N-terminus, the 147-residue chain is Hemoglobin subunit epsilon (147 aa).

The Globin domain occupies 3 to 147; that stretch reads HFTAEEKSTI…VATALAHKYH (145 aa). Phosphoserine is present on residues Ser-14 and Ser-51. Positions 64 and 93 each coordinate heme b.

The protein belongs to the globin family. In terms of assembly, heterotetramer of two alpha chains and two epsilon chains in early embryonic hemoglobin Gower-2; two zeta chains and two epsilon chains in early embryonic hemoglobin Gower-1. In terms of tissue distribution, red blood cells.

The epsilon chain is a beta-type chain of early mammalian embryonic hemoglobin. This chain is Hemoglobin subunit epsilon (HBE1), found in Propithecus verreauxi (White sifaka).